Consider the following 1020-residue polypeptide: Tetrathionate reductase subunit A (1020 aa).

A signal peptide (tat-type signal) is located at residues 1–33; sequence MANLTRRQWLKVGLAVGGMVTFGLSYRDVAKRA. In terms of domain architecture, 4Fe-4S Mo/W bis-MGD-type spans 71–154; sequence QTIAMTQCFG…TLLESLYSPL (84 aa). [4Fe-4S] cluster contacts are provided by Cys78, Cys81, Cys85, and Cys140.

This sequence belongs to the prokaryotic molybdopterin-containing oxidoreductase family. In terms of assembly, probably composed of three subunits: TtrA, TtrB and TtrC. It depends on [4Fe-4S] cluster as a cofactor. Requires Mo-bis(molybdopterin guanine dinucleotide) as cofactor. Predicted to be exported by the Tat system. The position of the signal peptide cleavage has not been experimentally proven.

The protein localises to the periplasm. Its subcellular location is the cell inner membrane. Part of a membrane-bound tetrathionate reductase that catalyzes the reduction of tetrathionate to thiosulfate. TtrA is the catalytic subunit. During mice infection, the ability to use tetrathionate as an electron acceptor is a growth advantage for S.typhimurium over the competing microbiota in the lumen of the inflamed gut. The protein is Tetrathionate reductase subunit A (ttrA) of Salmonella typhimurium (strain LT2 / SGSC1412 / ATCC 700720).